The primary structure comprises 338 residues: Glyceraldehyde-3-phosphate dehydrogenase (338 aa).

NAD(+)-binding positions include T11 to I12 and G111. S140 to N142 contributes to the D-glyceraldehyde 3-phosphate binding site. The active-site Nucleophile is C141. NAD(+) is bound at residue R169. Position 195–196 (H195–G196) interacts with D-glyceraldehyde 3-phosphate. Q302 is an NAD(+) binding site.

This sequence belongs to the glyceraldehyde-3-phosphate dehydrogenase family. In terms of assembly, homotetramer.

The protein resides in the cytoplasm. It catalyses the reaction D-glyceraldehyde 3-phosphate + phosphate + NADP(+) = (2R)-3-phospho-glyceroyl phosphate + NADPH + H(+). It carries out the reaction D-glyceraldehyde 3-phosphate + phosphate + NAD(+) = (2R)-3-phospho-glyceroyl phosphate + NADH + H(+). It functions in the pathway carbohydrate degradation; glycolysis; pyruvate from D-glyceraldehyde 3-phosphate: step 1/5. The sequence is that of Glyceraldehyde-3-phosphate dehydrogenase (gap) from Methanobacterium formicicum.